The sequence spans 174 residues: NAD(P)H-quinone oxidoreductase subunit J, chloroplastic (174 aa).

The protein belongs to the complex I 30 kDa subunit family. In terms of assembly, NDH is composed of at least 16 different subunits, 5 of which are encoded in the nucleus.

The protein resides in the plastid. Its subcellular location is the chloroplast thylakoid membrane. It catalyses the reaction a plastoquinone + NADH + (n+1) H(+)(in) = a plastoquinol + NAD(+) + n H(+)(out). The catalysed reaction is a plastoquinone + NADPH + (n+1) H(+)(in) = a plastoquinol + NADP(+) + n H(+)(out). In terms of biological role, NDH shuttles electrons from NAD(P)H:plastoquinone, via FMN and iron-sulfur (Fe-S) centers, to quinones in the photosynthetic chain and possibly in a chloroplast respiratory chain. The immediate electron acceptor for the enzyme in this species is believed to be plastoquinone. Couples the redox reaction to proton translocation, and thus conserves the redox energy in a proton gradient. This chain is NAD(P)H-quinone oxidoreductase subunit J, chloroplastic, found in Mesostigma viride (Green alga).